We begin with the raw amino-acid sequence, 136 residues long: Ribosome-binding factor A (136 aa).

It belongs to the RbfA family. In terms of assembly, monomer. Binds 30S ribosomal subunits, but not 50S ribosomal subunits or 70S ribosomes.

The protein resides in the cytoplasm. One of several proteins that assist in the late maturation steps of the functional core of the 30S ribosomal subunit. Associates with free 30S ribosomal subunits (but not with 30S subunits that are part of 70S ribosomes or polysomes). Required for efficient processing of 16S rRNA. May interact with the 5'-terminal helix region of 16S rRNA. This chain is Ribosome-binding factor A, found in Yersinia enterocolitica serotype O:8 / biotype 1B (strain NCTC 13174 / 8081).